The following is a 588-amino-acid chain: MEESNNNNFLFSPDYIWSQLLENNNNNYNNNYNNINNSINENLLNELNSFQNTGVFDLDTNIEQQQQQQPTEIQQQLQNYQEFQQKKYQERQEQYQIQYQQSYIEPLNFNETYNNETYCNIIPQPPQVEQQQEQEQEQEQQQKQQQQQYIEKQIQEIIKIPEKRQTLNQIPIEMMQHNFFNTPKLDQQLLSNYSDFFKTNPILPTTTTTTTTTAITIDQQQQNHIDNQSLNNSNTKTSKNQQKDNNLPKKKNLSYDITKITFNNNNIEKKRDQTESSKNFREKKKEYVKEIESKILALTLENDKLKKENDSLKTINGSNLMRPEPESINMIMECKKIIKKLEKALIDNDERSLIYLLYHYHSETSKRYSLVEIEVDKIANPYSQIKLKLAGYIQNPTTLDIFDGNFNNNNNNNGNKEEEEEISWFIKYKNEANLTIEQSNKLDLLRNQHGLIFETLLKERKQLDNEILKVFNEIIIASYDGSNANLISDKGFELKSKLKSLKMKIISSLNLNLDTFSSISSILLPKQEALLLVRAHLFGSSKLNPQMDFLNNVWTNIISSNSSCSVFEILNSLKEFSDLENLELNKNS.

A coiled-coil region spans residues 127–157; the sequence is QVEQQQEQEQEQEQQQKQQQQQYIEKQIQEI. Over residues 221-240 the composition is skewed to low complexity; the sequence is QQNHIDNQSLNNSNTKTSKN. The interval 221-250 is disordered; that stretch reads QQNHIDNQSLNNSNTKTSKNQQKDNNLPKK. The region spanning 263 to 326 is the bZIP domain; that stretch reads NNNNIEKKRD…GSNLMRPEPE (64 aa). The basic motif stretch occupies residues 269–289; it reads KKRDQTESSKNFREKKKEYVK. Residues 291–312 form a leucine-zipper region; it reads IESKILALTLENDKLKKENDSL.

This sequence belongs to the bZIP family.

Its subcellular location is the nucleus. Functionally, probable transcriptional regulator. This Dictyostelium discoideum (Social amoeba) protein is Probable basic-leucine zipper transcription factor M (bzpM).